The chain runs to 135 residues: Large ribosomal subunit protein uL16m (135 aa).

It belongs to the universal ribosomal protein uL16 family.

It localises to the mitochondrion. This chain is Large ribosomal subunit protein uL16m (RPL16), found in Marchantia polymorpha (Common liverwort).